The sequence spans 133 residues: Ribosome-binding factor A (133 aa).

Belongs to the RbfA family. Monomer. Binds 30S ribosomal subunits, but not 50S ribosomal subunits or 70S ribosomes.

The protein localises to the cytoplasm. Functionally, one of several proteins that assist in the late maturation steps of the functional core of the 30S ribosomal subunit. Associates with free 30S ribosomal subunits (but not with 30S subunits that are part of 70S ribosomes or polysomes). Required for efficient processing of 16S rRNA. May interact with the 5'-terminal helix region of 16S rRNA. This Enterobacter sp. (strain 638) protein is Ribosome-binding factor A.